A 313-amino-acid polypeptide reads, in one-letter code: Ribosomal RNA small subunit methyltransferase H (313 aa).

S-adenosyl-L-methionine is bound by residues 35-37 (GGH), aspartate 55, phenylalanine 79, aspartate 101, and glutamine 108.

This sequence belongs to the methyltransferase superfamily. RsmH family.

The protein localises to the cytoplasm. It catalyses the reaction cytidine(1402) in 16S rRNA + S-adenosyl-L-methionine = N(4)-methylcytidine(1402) in 16S rRNA + S-adenosyl-L-homocysteine + H(+). Its function is as follows. Specifically methylates the N4 position of cytidine in position 1402 (C1402) of 16S rRNA. The polypeptide is Ribosomal RNA small subunit methyltransferase H (Erwinia tasmaniensis (strain DSM 17950 / CFBP 7177 / CIP 109463 / NCPPB 4357 / Et1/99)).